The following is a 190-amino-acid chain: MRGLRPALSTFIFLLLITGGVYPLLTTVLGQWWFPWQANGSLIREGDTVRGSALIGQNFTGNGYFQGRPSATAEMPYNPQASGGSNLAVSNPELDKQIAARVAALRAANPDASTNVPVELVTASASGLDNNITPQAAAWQIPRVAKARNLSVEQLTQLIAKYSQQPLVKYIGQPVINIVELNLALDKLDE.

Residues 10-30 traverse the membrane as a helical segment; it reads TFIFLLLITGGVYPLLTTVLG.

This sequence belongs to the KdpC family. In terms of assembly, the system is composed of three essential subunits: KdpA, KdpB and KdpC.

It is found in the cell inner membrane. Functionally, part of the high-affinity ATP-driven potassium transport (or Kdp) system, which catalyzes the hydrolysis of ATP coupled with the electrogenic transport of potassium into the cytoplasm. This subunit acts as a catalytic chaperone that increases the ATP-binding affinity of the ATP-hydrolyzing subunit KdpB by the formation of a transient KdpB/KdpC/ATP ternary complex. The polypeptide is Potassium-transporting ATPase KdpC subunit (Escherichia coli O139:H28 (strain E24377A / ETEC)).